The primary structure comprises 242 residues: MNHKDPLVSWNVFGLDVVFNLSSIMMLIITAVIVFVIAIICTRNLKKRPTGKQNFIEWVFDFVRGIIESNMAWSKGGQFHFLAVTLIFFIFVSNMLGLPFQLISGHTLWWKSPTADATVTLTLSTLIILLTHFYGVRMKGTKGYFQNYTKPIFLLPINIFEEFTSTLTLGLRLYGNIFAGELLLGLLAGLVTGDSTRAWGWIIGLPGLVVWQGFSIFIGTIQAYIFVMLSMVYMSHKVQDSH.

Transmembrane regions (helical) follow at residues 21–41, 79–99, 116–136, 173–193, and 198–218; these read LSSIMMLIITAVIVFVIAIIC, FHFLAVTLIFFIFVSNMLGLP, DATVTLTLSTLIILLTHFYGV, LYGNIFAGELLLGLLAGLVTG, and AWGWIIGLPGLVVWQGFSIFI.

Belongs to the ATPase A chain family. As to quaternary structure, F-type ATPases have 2 components, CF(1) - the catalytic core - and CF(0) - the membrane proton channel. CF(1) has five subunits: alpha(3), beta(3), gamma(1), delta(1), epsilon(1). CF(0) has three main subunits: a(1), b(2) and c(9-12). The alpha and beta chains form an alternating ring which encloses part of the gamma chain. CF(1) is attached to CF(0) by a central stalk formed by the gamma and epsilon chains, while a peripheral stalk is formed by the delta and b chains.

It is found in the cell membrane. Key component of the proton channel; it plays a direct role in the translocation of protons across the membrane. The chain is ATP synthase subunit a from Staphylococcus saprophyticus subsp. saprophyticus (strain ATCC 15305 / DSM 20229 / NCIMB 8711 / NCTC 7292 / S-41).